The sequence spans 346 residues: 4-hydroxy-2-oxohexanoate aldolase (346 aa).

The Pyruvate carboxyltransferase domain occupies 7 to 259; the sequence is VRITDTSLRD…KTGIDFFDIA (253 aa). A substrate-binding site is contributed by 15–16; that stretch reads RD. Mn(2+) is bound at residue aspartate 16. Histidine 19 (proton acceptor) is an active-site residue. 2 residues coordinate substrate: serine 169 and histidine 198. 2 residues coordinate Mn(2+): histidine 198 and histidine 200. Tyrosine 289 is a binding site for substrate.

This sequence belongs to the 4-hydroxy-2-oxovalerate aldolase family. As to quaternary structure, homodimer. Forms a heterotetramer composed of two aldolase (HsaF) and two dehydrogenase (HsaG) subunits. Requires Mn(2+) as cofactor.

It carries out the reaction (S)-4-hydroxy-2-oxohexanoate = propanal + pyruvate. The enzyme catalyses (S)-4-hydroxy-2-oxopentanoate = acetaldehyde + pyruvate. Involved in cholesterol degradation. Catalyzes the retro-aldol cleavage of 4-hydroxy-2-oxohexanoate (HOHA) to pyruvate and propanal. Can also catalyze the cleavage of 4-hydroxy-2-oxopentanoate (HOPA) to pyruvate and acetaldehyde. The aldehydes produced by this reaction are directly channeled to the dehydrogenase HsaG. The chain is 4-hydroxy-2-oxohexanoate aldolase from Mycobacterium bovis (strain ATCC BAA-935 / AF2122/97).